We begin with the raw amino-acid sequence, 397 residues long: Enoyl-[acyl-carrier-protein] reductase [NADH] (397 aa).

NAD(+) contacts are provided by residues 48-53, 74-75, 111-112, and 139-140; these read GASTGY, FE, DA, and VA. A substrate-binding site is contributed by tyrosine 225. The Proton donor role is filled by tyrosine 235. Residues lysine 244 and 273–275 contribute to the NAD(+) site; that span reads VVT.

This sequence belongs to the TER reductase family. In terms of assembly, monomer.

The catalysed reaction is a 2,3-saturated acyl-[ACP] + NAD(+) = a (2E)-enoyl-[ACP] + NADH + H(+). The protein operates within lipid metabolism; fatty acid biosynthesis. Its function is as follows. Involved in the final reduction of the elongation cycle of fatty acid synthesis (FAS II). Catalyzes the reduction of a carbon-carbon double bond in an enoyl moiety that is covalently linked to an acyl carrier protein (ACP). The chain is Enoyl-[acyl-carrier-protein] reductase [NADH] from Burkholderia pseudomallei (strain 1106a).